Reading from the N-terminus, the 286-residue chain is Beta-glucanase (286 aa).

The first 30 residues, 1-30, serve as a signal peptide directing secretion; sequence MCTMPLMKLKKMMRRTAFLLSVLIGCSMLG. A GH16 domain is found at 48-286; that stretch reads FDYSGLPDPE…DYVRVYRWVE (239 aa). The active-site Nucleophile is Glu158. Glu163 serves as the catalytic Proton donor.

Belongs to the glycosyl hydrolase 16 family.

The catalysed reaction is Hydrolysis of (1-&gt;4)-beta-D-glucosidic linkages in beta-D-glucans containing (1-&gt;3)- and (1-&gt;4)-bonds.. Shows activity on lichenan, beta-glucan and laminarin but not on CMC cellulose or xylan. This chain is Beta-glucanase (bglA), found in Rhodothermus marinus (Rhodothermus obamensis).